The sequence spans 277 residues: Bis(5'-nucleosyl)-tetraphosphatase, symmetrical (277 aa).

Belongs to the Ap4A hydrolase family.

It catalyses the reaction P(1),P(4)-bis(5'-adenosyl) tetraphosphate + H2O = 2 ADP + 2 H(+). Its function is as follows. Hydrolyzes diadenosine 5',5'''-P1,P4-tetraphosphate to yield ADP. This chain is Bis(5'-nucleosyl)-tetraphosphatase, symmetrical, found in Bordetella bronchiseptica (strain ATCC BAA-588 / NCTC 13252 / RB50) (Alcaligenes bronchisepticus).